A 296-amino-acid polypeptide reads, in one-letter code: 4-hydroxy-tetrahydrodipicolinate synthase (296 aa).

Threonine 49 lines the pyruvate pocket. The Proton donor/acceptor role is filled by tyrosine 137. Catalysis depends on lysine 166, which acts as the Schiff-base intermediate with substrate. Position 208 (isoleucine 208) interacts with pyruvate.

Belongs to the DapA family. As to quaternary structure, homotetramer; dimer of dimers.

The protein localises to the cytoplasm. The catalysed reaction is L-aspartate 4-semialdehyde + pyruvate = (2S,4S)-4-hydroxy-2,3,4,5-tetrahydrodipicolinate + H2O + H(+). It functions in the pathway amino-acid biosynthesis; L-lysine biosynthesis via DAP pathway; (S)-tetrahydrodipicolinate from L-aspartate: step 3/4. In terms of biological role, catalyzes the condensation of (S)-aspartate-beta-semialdehyde [(S)-ASA] and pyruvate to 4-hydroxy-tetrahydrodipicolinate (HTPA). The sequence is that of 4-hydroxy-tetrahydrodipicolinate synthase from Azobacteroides pseudotrichonymphae genomovar. CFP2.